The sequence spans 1185 residues: ELMO domain-containing protein F (1185 aa).

Disordered stretches follow at residues Gln-88–Asn-133, Ile-176–Glu-196, Asn-361–Glu-409, Lys-566–Ser-628, Glu-642–Gly-805, Leu-819–Ile-868, Asp-883–Thr-989, and Gln-1044–Leu-1114. Composition is skewed to low complexity over residues Ser-94 to Ile-127, Ile-176 to Thr-194, Asn-361 to Val-406, and Pro-587 to Ser-613. The 214-residue stretch at Asp-275–Lys-488 folds into the ELMO domain. Residues Ser-648–Ser-665 show a composition bias toward polar residues. A compositionally biased stretch (low complexity) spans Ser-688–Glu-699. Residues Phe-721–Ile-732 are compositionally biased toward polar residues. Low complexity-rich tracts occupy residues Ser-733–Ser-760 and Thr-767–Thr-780. The span at Asp-781–Pro-790 shows a compositional bias: polar residues. The span at Lys-829–Lys-841 shows a compositional bias: basic residues. Composition is skewed to low complexity over residues Asn-853–Ser-864, Ser-912–Gln-974, Asp-1053–Glu-1072, and Gly-1096–Ser-1109.

The chain is ELMO domain-containing protein F (elmoF) from Dictyostelium discoideum (Social amoeba).